The sequence spans 227 residues: Small ribosomal subunit protein uS3 (227 aa).

The KH type-2 domain maps to 38–106; that stretch reads LRKYLREKLA…EVHLNIVEIR (69 aa).

This sequence belongs to the universal ribosomal protein uS3 family. In terms of assembly, part of the 30S ribosomal subunit. Forms a tight complex with proteins S10 and S14.

In terms of biological role, binds the lower part of the 30S subunit head. Binds mRNA in the 70S ribosome, positioning it for translation. The polypeptide is Small ribosomal subunit protein uS3 (Paramagnetospirillum magneticum (strain ATCC 700264 / AMB-1) (Magnetospirillum magneticum)).